Reading from the N-terminus, the 700-residue chain is Glycine--tRNA ligase beta subunit (700 aa).

It belongs to the class-II aminoacyl-tRNA synthetase family. In terms of assembly, tetramer of two alpha and two beta subunits.

Its subcellular location is the cytoplasm. It catalyses the reaction tRNA(Gly) + glycine + ATP = glycyl-tRNA(Gly) + AMP + diphosphate. The chain is Glycine--tRNA ligase beta subunit from Helicobacter pylori (strain Shi470).